Reading from the N-terminus, the 882-residue chain is Translation initiation factor IF-2 (882 aa).

2 disordered regions span residues 67–202 and 223–278; these read KTVS…EKAR and ERYG…KHMK. Composition is skewed to basic and acidic residues over residues 95 to 152 and 161 to 202; these read VKRD…EAKA and EQPK…EKAR. Residues 251-264 are compositionally biased toward basic residues; the sequence is GRRNRNKTQTKSKR. The span at 265 to 274 shows a compositional bias: basic and acidic residues; that stretch reads GGKDAREGRE. The 170-residue stretch at 382 to 551 folds into the tr-type G domain; it reads PRAPVVTIMG…LLQAEVLELK (170 aa). Residues 391–398 form a G1 region; it reads GHVDHGKT. A GTP-binding site is contributed by 391-398; the sequence is GHVDHGKT. Residues 416–420 form a G2 region; the sequence is GITQH. Residues 437-440 form a G3 region; the sequence is DTPG. Residues 437–441 and 491–494 contribute to the GTP site; these read DTPGH and NKMD. The G4 stretch occupies residues 491 to 494; that stretch reads NKMD. The G5 stretch occupies residues 527-529; sequence SAK.

This sequence belongs to the TRAFAC class translation factor GTPase superfamily. Classic translation factor GTPase family. IF-2 subfamily.

It localises to the cytoplasm. Its function is as follows. One of the essential components for the initiation of protein synthesis. Protects formylmethionyl-tRNA from spontaneous hydrolysis and promotes its binding to the 30S ribosomal subunits. Also involved in the hydrolysis of GTP during the formation of the 70S ribosomal complex. In Shewanella amazonensis (strain ATCC BAA-1098 / SB2B), this protein is Translation initiation factor IF-2.